The chain runs to 394 residues: V-type proton ATPase subunit C (394 aa).

S17 carries the post-translational modification Phosphoserine.

The protein belongs to the V-ATPase C subunit family. As to quaternary structure, V-ATPase is a heteromultimeric enzyme composed of a peripheral catalytic V1 complex (components A to H) attached to an integral membrane V0 proton pore complex (components: a, c, c', c'', d, e, f and VOA1).

Its subcellular location is the cytoplasm. The protein resides in the vacuole membrane. Its function is as follows. Subunit of the V1 complex of vacuolar(H+)-ATPase (V-ATPase), a multisubunit enzyme composed of a peripheral complex (V1) that hydrolyzes ATP and a membrane integral complex (V0) that translocates protons. V-ATPase is responsible for acidifying and maintaining the pH of intracellular compartments. Subunit C is necessary for the assembly of the catalytic sector of the enzyme and is likely to have a specific function in its catalytic activity. Reversibly leaves the enzyme after glucose depletion, causing the catalytic subcomplex V1 to detach from the V0 section. The protein is V-type proton ATPase subunit C of Schizosaccharomyces pombe (strain 972 / ATCC 24843) (Fission yeast).